Reading from the N-terminus, the 311-residue chain is Methionyl-tRNA formyltransferase (311 aa).

112–115 is a (6S)-5,6,7,8-tetrahydrofolate binding site; that stretch reads SLLP.

It belongs to the Fmt family.

It carries out the reaction L-methionyl-tRNA(fMet) + (6R)-10-formyltetrahydrofolate = N-formyl-L-methionyl-tRNA(fMet) + (6S)-5,6,7,8-tetrahydrofolate + H(+). In terms of biological role, attaches a formyl group to the free amino group of methionyl-tRNA(fMet). The formyl group appears to play a dual role in the initiator identity of N-formylmethionyl-tRNA by promoting its recognition by IF2 and preventing the misappropriation of this tRNA by the elongation apparatus. The chain is Methionyl-tRNA formyltransferase from Bradyrhizobium sp. (strain BTAi1 / ATCC BAA-1182).